The primary structure comprises 1016 residues: DENN domain-containing protein 1A (1016 aa).

Residues 13-145 (FEVYVEVAYP…HRLPIPDPGV (133 aa)) enclose the uDENN domain. The cDENN domain occupies 162-298 (ELPSIPENRN…VISSLKNRLK (137 aa)). The region spanning 300–378 (VSTTTGDGVA…DGRLDLLNSG (79 aa)) is the dDENN domain. The FXDXF motif motif lies at 381-385 (FSDVF). The tract at residues 453–565 (DITENGCVSS…GPTPAPPDRA (113 aa)) is disordered. Phosphoserine is present on S473. Residues 479–489 (QDPRLREDRRP) show a composition bias toward basic and acidic residues. Residues 500 to 509 (PRPHVVRRPK) show a composition bias toward basic residues. T519 carries the post-translational modification Phosphothreonine. A phosphoserine mark is found at S520, S522, S523, S536, S538, and S546. The Clathrin box signature appears at 569-578 (DLLEDVFSSL). At S592 the chain carries Phosphoserine. Residues 681–737 (LSPSIKEETPIPTPGSITIPRPQGRKTPELGIVPPPPTARPAKLQAAGGPLGDFSSE) are disordered. Residue S750 is modified to Phosphoserine. The residue at position 760 (R760) is an Omega-N-methylarginine. 2 disordered regions span residues 763–783 (PQGP…AGTG) and 935–1016 (SARA…ETFE). Residues 954–970 (LLPPRPPQSLQPTPQPS) show a composition bias toward pro residues. Basic and acidic residues-rich tracts occupy residues 977-988 (DPFEDLLRKTKQ) and 1007-1016 (QLRRQWETFE).

Interacts with RAB35. Interacts with clathrin and with the adapter protein complex 2, AP-2. Interacts with ITSN1 and SH3GL2. Interacts (when phosphorylated) with YWHAE. Post-translationally, phosphorylated on serine and/or threonine in an Akt-dependent manner. Phosphorylation probably regulates the guanine nucleotide exchange factor (GEF) activity, possibly by disrupting an intramolecular interaction between the DENN domain and the C-terminus of the protein, thereby relieving the autoinhibition.

The protein localises to the cytoplasmic vesicle. Its subcellular location is the clathrin-coated vesicle membrane. The protein resides in the presynaptic cell membrane. The guanine nucleotide exchange factor (GEF) activity is autoinhibited. Autoinhibition may be the result of intramolecular interaction between the DENN domain and the C-terminus, which is disrupted upon phosphorylation. Activation is regulated by Akt activation. In terms of biological role, guanine nucleotide exchange factor (GEF) regulating clathrin-mediated endocytosis through RAB35 activation. Promotes the exchange of GDP to GTP, converting inactive GDP-bound RAB35 into its active GTP-bound form. Regulates clathrin-mediated endocytosis of synaptic vesicles and mediates exit from early endosomes. Binds phosphatidylinositol-phosphates (PtdInsPs), with some preference for PtdIns(3)P. The chain is DENN domain-containing protein 1A (Dennd1a) from Mus musculus (Mouse).